Consider the following 277-residue polypeptide: MDPSILSKLEYKTVNNIYYGTGIFIIRDDNDDIKYFKTYGKLTEFKHDSFLLVDLNVMIYDTVKTDYLITISDRQELTLCSASITDLKNFRIKGSRDTTNNSVLFSQFTKNNPLIVKSKNNPIYLEIKFQCETRLLKSLYFFSTGPKCGIKKVDENNYTNEYTHFDNFTEIYQTDEKKHEIVTFNNWYKFDDFIGFKLYNLNFSIINNNMEIIDIEHDRVSLSLNEFVNNFDFELLTEDNPIFIESGNIPSVLFFDKCTDSEYHRINFTVKKIDEID.

This is an uncharacterized protein from Acanthamoeba polyphaga mimivirus (APMV).